A 265-amino-acid chain; its full sequence is MGLRIHFVVDPHGWCCMGLIVFVWLYNIVIIPKIVLFPHYEEGHIPGILIIIFYGISIFCLVALVRASLTDPGRLPENPKIPHAERELWELCNKCNLMRPKRSHHCSRCGHCVRRMDHHCPWINNCVGEDNHWLFLQLCFYTELLTCYALMFSFCHYYYFLPLKKRNLDLFVVRHELAIMRLAAFMGITMLVGITGLFYTQLIGIITDTTSIEKMSNCCEEISRPRKPWQQTFSEVFGTRWKILWFIPFRQRQPLRVPYHFANHV.

The Cytoplasmic segment spans residues 1–16 (MGLRIHFVVDPHGWCC). The chain crosses the membrane as a helical span at residues 17 to 37 (MGLIVFVWLYNIVIIPKIVLF). Residues 38–44 (PHYEEGH) lie on the Extracellular side of the membrane. The helical transmembrane segment at 45-65 (IPGILIIIFYGISIFCLVALV) threads the bilayer. The Cytoplasmic segment spans residues 66-133 (RASLTDPGRL…NNCVGEDNHW (68 aa)). Positions 90–140 (ELCNKCNLMRPKRSHHCSRCGHCVRRMDHHCPWINNCVGEDNHWLFLQLCF) constitute a DHHC domain. Residue C120 is the S-palmitoyl cysteine intermediate of the active site. The helical transmembrane segment at 134 to 154 (LFLQLCFYTELLTCYALMFSF) threads the bilayer. Over 155–185 (CHYYYFLPLKKRNLDLFVVRHELAIMRLAAF) the chain is Extracellular. A helical transmembrane segment spans residues 186–206 (MGITMLVGITGLFYTQLIGII). The Cytoplasmic segment spans residues 207–265 (TDTTSIEKMSNCCEEISRPRKPWQQTFSEVFGTRWKILWFIPFRQRQPLRVPYHFANHV).

The protein belongs to the DHHC palmitoyltransferase family. Widely expressed. Expressed in Henle's layer within the hair bulb and the hair shaft cuticle (at protein level). Expression is limited to the post-mitotic lineages of inner root sheath (IRS) and cuticle.

It localises to the golgi apparatus membrane. The protein resides in the golgi apparatus. The protein localises to the cis-Golgi network membrane. Its subcellular location is the cell membrane. It carries out the reaction L-cysteinyl-[protein] + hexadecanoyl-CoA = S-hexadecanoyl-L-cysteinyl-[protein] + CoA. Palmitoyltransferase that catalyzes the addition of palmitate onto various protein substrates. Palmitoylates sex steroid hormone receptors, including ESR1, PGR and AR, thereby regulating their targeting to the plasma membrane. This affects rapid intracellular signaling by sex hormones via ERK and AKT kinases and the generation of cAMP, but does not affect that mediated by their nuclear receptor. Palmitoylates FYN, regulates its localization in hair follicles and plays a key role in epidermal homeostasis and hair follicle differentiation. Through the palmitoylation of PLCB1 and the regulation of PLCB1 downstream signaling may indirectly regulate the function of the endothelial barrier and the adhesion of leukocytes to the endothelium. Also has a palmitoyltransferase activity toward ADRA1D, positively regulating its activity and expression and may thereby play a role in vascular contraction. May also palmitoylate eNOS and LCK. This chain is Palmitoyltransferase ZDHHC21, found in Mus musculus (Mouse).